A 370-amino-acid polypeptide reads, in one-letter code: Histidinol-phosphate aminotransferase 1 (370 aa).

At Lys222 the chain carries N6-(pyridoxal phosphate)lysine.

This sequence belongs to the class-II pyridoxal-phosphate-dependent aminotransferase family. Histidinol-phosphate aminotransferase subfamily. In terms of assembly, homodimer. It depends on pyridoxal 5'-phosphate as a cofactor.

The catalysed reaction is L-histidinol phosphate + 2-oxoglutarate = 3-(imidazol-4-yl)-2-oxopropyl phosphate + L-glutamate. The protein operates within amino-acid biosynthesis; L-histidine biosynthesis; L-histidine from 5-phospho-alpha-D-ribose 1-diphosphate: step 7/9. The polypeptide is Histidinol-phosphate aminotransferase 1 (Bacillus cereus (strain ATCC 10987 / NRS 248)).